The following is a 620-amino-acid chain: 1-deoxy-D-xylulose-5-phosphate synthase (620 aa).

Thiamine diphosphate contacts are provided by residues His80 and Gly121–Ser123. Asp152 lines the Mg(2+) pocket. Thiamine diphosphate is bound by residues Gly153–Ala154, Asn181, Tyr288, and Glu370. A Mg(2+)-binding site is contributed by Asn181.

This sequence belongs to the transketolase family. DXPS subfamily. In terms of assembly, homodimer. Mg(2+) is required as a cofactor. Requires thiamine diphosphate as cofactor.

The catalysed reaction is D-glyceraldehyde 3-phosphate + pyruvate + H(+) = 1-deoxy-D-xylulose 5-phosphate + CO2. Its pathway is metabolic intermediate biosynthesis; 1-deoxy-D-xylulose 5-phosphate biosynthesis; 1-deoxy-D-xylulose 5-phosphate from D-glyceraldehyde 3-phosphate and pyruvate: step 1/1. In terms of biological role, catalyzes the acyloin condensation reaction between C atoms 2 and 3 of pyruvate and glyceraldehyde 3-phosphate to yield 1-deoxy-D-xylulose-5-phosphate (DXP). This Klebsiella pneumoniae (strain 342) protein is 1-deoxy-D-xylulose-5-phosphate synthase.